Reading from the N-terminus, the 246-residue chain is tRNA pseudouridine synthase A (246 aa).

Catalysis depends on aspartate 54, which acts as the Nucleophile. Substrate is bound at residue tyrosine 112.

The protein belongs to the tRNA pseudouridine synthase TruA family. As to quaternary structure, homodimer.

The enzyme catalyses uridine(38/39/40) in tRNA = pseudouridine(38/39/40) in tRNA. In terms of biological role, formation of pseudouridine at positions 38, 39 and 40 in the anticodon stem and loop of transfer RNAs. The polypeptide is tRNA pseudouridine synthase A (Moorella thermoacetica (strain ATCC 39073 / JCM 9320)).